A 274-amino-acid chain; its full sequence is ATP synthase subunit delta (274 aa).

It belongs to the ATPase delta chain family. In terms of assembly, F-type ATPases have 2 components, F(1) - the catalytic core - and F(0) - the membrane proton channel. F(1) has five subunits: alpha(3), beta(3), gamma(1), delta(1), epsilon(1). F(0) has three main subunits: a(1), b(2) and c(10-14). The alpha and beta chains form an alternating ring which encloses part of the gamma chain. F(1) is attached to F(0) by a central stalk formed by the gamma and epsilon chains, while a peripheral stalk is formed by the delta and b chains.

The protein localises to the cell membrane. In terms of biological role, f(1)F(0) ATP synthase produces ATP from ADP in the presence of a proton or sodium gradient. F-type ATPases consist of two structural domains, F(1) containing the extramembraneous catalytic core and F(0) containing the membrane proton channel, linked together by a central stalk and a peripheral stalk. During catalysis, ATP synthesis in the catalytic domain of F(1) is coupled via a rotary mechanism of the central stalk subunits to proton translocation. Functionally, this protein is part of the stalk that links CF(0) to CF(1). It either transmits conformational changes from CF(0) to CF(1) or is implicated in proton conduction. The polypeptide is ATP synthase subunit delta (Streptomyces coelicolor (strain ATCC BAA-471 / A3(2) / M145)).